The sequence spans 55 residues: Trypsin inhibitor (55 aa).

The 55-residue stretch at 1 to 55 (AHMDCTEFNPLCRCNKMLGDLICAVIGDAKEEHRNMCALCCEHPGGFEYSNGPCE) folds into the Kazal-like domain. 4 cysteine pairs are disulfide-bonded: C5-C40, C12-C41, C14-C37, and C23-C54.

The protein resides in the secreted. Its function is as follows. Potent inhibitor of trypsin. The chain is Trypsin inhibitor from Halocynthia roretzi (Sea squirt).